Here is a 438-residue protein sequence, read N- to C-terminus: Adenosylhomocysteinase (438 aa).

Positions 64, 139, and 164 each coordinate substrate. 165–167 lines the NAD(+) pocket; it reads TTT. K194 and D198 together coordinate substrate. NAD(+) contacts are provided by residues N199, 228 to 233, E251, N286, 307 to 309, and N352; these read GYGDVG and IGH.

It belongs to the adenosylhomocysteinase family. NAD(+) serves as cofactor.

It is found in the cytoplasm. It carries out the reaction S-adenosyl-L-homocysteine + H2O = L-homocysteine + adenosine. The protein operates within amino-acid biosynthesis; L-homocysteine biosynthesis; L-homocysteine from S-adenosyl-L-homocysteine: step 1/1. Its function is as follows. May play a key role in the regulation of the intracellular concentration of adenosylhomocysteine. In Coxiella burnetii (strain Dugway 5J108-111), this protein is Adenosylhomocysteinase.